Consider the following 300-residue polypeptide: Enoyl-CoA hydratase domain-containing protein 3, mitochondrial (300 aa).

The N-terminal 66 residues, 1–66 (MAVVAGLRAF…RNIVLSNPRR (66 aa)), are a transit peptide targeting the mitochondrion. The segment at 34-53 (GSAGPAGSESEPRLTSTRQQ) is disordered. Lys110 bears the N6-succinyllysine mark.

The protein belongs to the enoyl-CoA hydratase/isomerase family.

The protein localises to the mitochondrion. Functionally, may play a role in fatty acid biosynthesis and insulin sensitivity. The protein is Enoyl-CoA hydratase domain-containing protein 3, mitochondrial of Mus musculus (Mouse).